Reading from the N-terminus, the 476-residue chain is MTSISIDQPIHVIGGGLAGSEAAWQIAQAGIRVVLHEMRPIRMTEAHRSDSLAELVCSNSFRSDDAANNAVGLLHAEMRRLNSLVMRAADANQVPAGGALAVDRDGFAAAVTRALAEHPLIEIRRGEVDGLPPADWSNVVISTGPLTSAPLAAAIQALTGEDSLSFFDAIAPIVHRDSIDMTKAWFQSRYDKVGPGGTGADYLNCPMTREQYDGFVAALVAGDKVDFKDWEKDTPYFDGCLPIEVMAERGPETLRYGPMKPVGLTNPHNPTVKPYGIVQLRQDNKLGTLYNMVGFQTKLKHGEQARIFRTIPGLENADFARLGGLHRNTFLNSPKLLDSQLRLRAEPRLRFAGQMTGCEGYVESAGIGLIAGLCAAADAVGRALTPPPPTTALGALLGHITGGHIETIDAGPRSFQPMNINFGLFPPLTEPPTHGADGKKLRGPEKSVAKKQALSARALADLDRWIADAVRVAAAA.

FAD is bound at residue 14–19; that stretch reads GGGLAG. A disordered region spans residues 428-447; it reads LTEPPTHGADGKKLRGPEKS. Residues 436 to 447 are compositionally biased toward basic and acidic residues; the sequence is ADGKKLRGPEKS.

The protein belongs to the MnmG family. TrmFO subfamily. FAD is required as a cofactor.

It localises to the cytoplasm. The enzyme catalyses uridine(54) in tRNA + (6R)-5,10-methylene-5,6,7,8-tetrahydrofolate + NADH + H(+) = 5-methyluridine(54) in tRNA + (6S)-5,6,7,8-tetrahydrofolate + NAD(+). The catalysed reaction is uridine(54) in tRNA + (6R)-5,10-methylene-5,6,7,8-tetrahydrofolate + NADPH + H(+) = 5-methyluridine(54) in tRNA + (6S)-5,6,7,8-tetrahydrofolate + NADP(+). Catalyzes the folate-dependent formation of 5-methyl-uridine at position 54 (M-5-U54) in all tRNAs. The sequence is that of Methylenetetrahydrofolate--tRNA-(uracil-5-)-methyltransferase TrmFO from Rhodopseudomonas palustris (strain BisA53).